We begin with the raw amino-acid sequence, 444 residues long: Serine--tRNA ligase (444 aa).

249–251 (TAE) provides a ligand contact to L-serine. Residues 280–282 (RRE) and Val-296 each bind ATP. Glu-303 contributes to the L-serine binding site. 367-370 (EIVS) contributes to the ATP binding site. Thr-401 contributes to the L-serine binding site.

The protein belongs to the class-II aminoacyl-tRNA synthetase family. Type-1 seryl-tRNA synthetase subfamily. In terms of assembly, homodimer. The tRNA molecule binds across the dimer.

It localises to the cytoplasm. The catalysed reaction is tRNA(Ser) + L-serine + ATP = L-seryl-tRNA(Ser) + AMP + diphosphate + H(+). It catalyses the reaction tRNA(Sec) + L-serine + ATP = L-seryl-tRNA(Sec) + AMP + diphosphate + H(+). It functions in the pathway aminoacyl-tRNA biosynthesis; selenocysteinyl-tRNA(Sec) biosynthesis; L-seryl-tRNA(Sec) from L-serine and tRNA(Sec): step 1/1. Catalyzes the attachment of serine to tRNA(Ser). Is also able to aminoacylate tRNA(Sec) with serine, to form the misacylated tRNA L-seryl-tRNA(Sec), which will be further converted into selenocysteinyl-tRNA(Sec). The polypeptide is Serine--tRNA ligase (Picrophilus torridus (strain ATCC 700027 / DSM 9790 / JCM 10055 / NBRC 100828 / KAW 2/3)).